The primary structure comprises 224 residues: Uridylate kinase (224 aa).

6–10 contacts ATP; the sequence is KVTGK. G41 is a binding site for UMP. Residues G42 and R46 each coordinate ATP. Residues D63 and 111 to 117 each bind UMP; that span reads FQPGQST. ATP is bound by residues T137, F143, and D146.

This sequence belongs to the UMP kinase family. Homohexamer.

Its subcellular location is the cytoplasm. The catalysed reaction is UMP + ATP = UDP + ADP. It functions in the pathway pyrimidine metabolism; CTP biosynthesis via de novo pathway; UDP from UMP (UMPK route): step 1/1. With respect to regulation, inhibited by UTP. Its function is as follows. Catalyzes the reversible phosphorylation of UMP to UDP. This Metallosphaera sedula (strain ATCC 51363 / DSM 5348 / JCM 9185 / NBRC 15509 / TH2) protein is Uridylate kinase.